The chain runs to 205 residues: Ras-related protein Rab-1A (205 aa).

Ser-2 bears the N-acetylserine mark. GTP contacts are provided by Ser-20, Gly-21, Gly-23, Lys-24, Ser-25, Cys-26, Glu-38, and Thr-43. Ser-25 lines the Mg(2+) pocket. Residues 34–48 carry the Switch 1 motif; sequence DTYTESYISTIGVDF. Thr-43 lines the Mg(2+) pocket. Residues Lys-49 and Lys-61 each participate in a glycyl lysine isopeptide (Lys-Gly) (interchain with G-Cter in ubiquitin) cross-link. Mg(2+) is bound at residue Asp-66. The Switch 2 signature appears at 66-83; sequence DTAGQERFRTITSSYYRG. GTP-binding residues include Gly-69, Asn-124, Lys-125, Asp-127, Ala-155, and Lys-156. The tract at residues 178 to 205 is disordered; the sequence is PGATAGGAEKSNVKIQSTPVKQSGGGCC. A Phosphoserine modification is found at Ser-194. 2 S-geranylgeranyl cysteine lipidation sites follow: Cys-204 and Cys-205.

This sequence belongs to the small GTPase superfamily. Rab family. In terms of assembly, may interact with YIPF5. Interacts with C9orf72; the interaction mediates recruitment of RAB1A to the ATG1/ULK1 kinase complex. Interacts with GDI1; this promotes dissociation from membranes. Mg(2+) serves as cofactor. Phosphorylated by CDK1 kinase during mitosis. Post-translationally, ubiquitinated via 'Lys-11'-linked ubiquitination on Lys-49 and Lys-61; impairing the recruitment of guanosine diphosphate (GDP) dissociation inhibitor 1/GDI1.

Its subcellular location is the golgi apparatus. It localises to the endoplasmic reticulum. The protein resides in the early endosome. The protein localises to the cytoplasm. It is found in the cytosol. Its subcellular location is the membrane. It localises to the melanosome. The catalysed reaction is GTP + H2O = GDP + phosphate + H(+). Regulated by guanine nucleotide exchange factors (GEFs) which promote the exchange of bound GDP for free GTP. Regulated by GTPase activating proteins (GAPs) which increase the GTP hydrolysis activity. Inhibited by GDP dissociation inhibitors (GDIs). The small GTPases Rab are key regulators of intracellular membrane trafficking, from the formation of transport vesicles to their fusion with membranes. Rabs cycle between an inactive GDP-bound form and an active GTP-bound form that is able to recruit to membranes different sets of downstream effectors directly responsible for vesicle formation, movement, tethering and fusion. RAB1A regulates vesicular protein transport from the endoplasmic reticulum (ER) to the Golgi compartment and on to the cell surface, and plays a role in IL-8 and growth hormone secretion. Required to modulate the compacted morphology of the Golgi. Regulates the level of CASR present at the cell membrane. Plays a role in cell adhesion and cell migration, via its role in protein trafficking. Plays a role in autophagosome assembly and cellular defense reactions against pathogenic bacteria. Plays a role in microtubule-dependent protein transport by early endosomes and in anterograde melanosome transport. In Canis lupus familiaris (Dog), this protein is Ras-related protein Rab-1A (RAB1A).